The sequence spans 151 residues: 3-hydroxyacyl-[acyl-carrier-protein] dehydratase FabZ (151 aa).

Histidine 56 is an active-site residue.

The protein belongs to the thioester dehydratase family. FabZ subfamily.

It is found in the cytoplasm. It carries out the reaction a (3R)-hydroxyacyl-[ACP] = a (2E)-enoyl-[ACP] + H2O. In terms of biological role, involved in unsaturated fatty acids biosynthesis. Catalyzes the dehydration of short chain beta-hydroxyacyl-ACPs and long chain saturated and unsaturated beta-hydroxyacyl-ACPs. The protein is 3-hydroxyacyl-[acyl-carrier-protein] dehydratase FabZ of Rhodopseudomonas palustris (strain ATCC BAA-98 / CGA009).